The following is a 295-amino-acid chain: Acetylglutamate kinase (295 aa).

Residues 66–67, R88, and N193 contribute to the substrate site; that span reads GG.

It belongs to the acetylglutamate kinase family. ArgB subfamily.

The protein resides in the cytoplasm. It carries out the reaction N-acetyl-L-glutamate + ATP = N-acetyl-L-glutamyl 5-phosphate + ADP. It participates in amino-acid biosynthesis; L-arginine biosynthesis; N(2)-acetyl-L-ornithine from L-glutamate: step 2/4. In terms of biological role, catalyzes the ATP-dependent phosphorylation of N-acetyl-L-glutamate. The sequence is that of Acetylglutamate kinase from Rhizobium rhizogenes (strain K84 / ATCC BAA-868) (Agrobacterium radiobacter).